The following is a 262-amino-acid chain: Hydroxyethylthiazole kinase (262 aa).

Methionine 50 lines the substrate pocket. Residues arginine 125 and threonine 171 each contribute to the ATP site. Glycine 198 contacts substrate.

It belongs to the Thz kinase family. Requires Mg(2+) as cofactor.

It carries out the reaction 5-(2-hydroxyethyl)-4-methylthiazole + ATP = 4-methyl-5-(2-phosphooxyethyl)-thiazole + ADP + H(+). Its pathway is cofactor biosynthesis; thiamine diphosphate biosynthesis; 4-methyl-5-(2-phosphoethyl)-thiazole from 5-(2-hydroxyethyl)-4-methylthiazole: step 1/1. Catalyzes the phosphorylation of the hydroxyl group of 4-methyl-5-beta-hydroxyethylthiazole (THZ). This Escherichia coli (strain 55989 / EAEC) protein is Hydroxyethylthiazole kinase.